A 307-amino-acid chain; its full sequence is Branched-chain-amino-acid aminotransferase (307 aa).

K160 carries the post-translational modification N6-(pyridoxal phosphate)lysine.

Belongs to the class-IV pyridoxal-phosphate-dependent aminotransferase family. Requires pyridoxal 5'-phosphate as cofactor.

The catalysed reaction is L-leucine + 2-oxoglutarate = 4-methyl-2-oxopentanoate + L-glutamate. It catalyses the reaction L-isoleucine + 2-oxoglutarate = (S)-3-methyl-2-oxopentanoate + L-glutamate. It carries out the reaction L-valine + 2-oxoglutarate = 3-methyl-2-oxobutanoate + L-glutamate. Its pathway is amino-acid biosynthesis; L-isoleucine biosynthesis; L-isoleucine from 2-oxobutanoate: step 4/4. It participates in amino-acid biosynthesis; L-leucine biosynthesis; L-leucine from 3-methyl-2-oxobutanoate: step 4/4. The protein operates within amino-acid biosynthesis; L-valine biosynthesis; L-valine from pyruvate: step 4/4. Its function is as follows. Acts on leucine, isoleucine and valine. In Pseudomonas aeruginosa (strain ATCC 15692 / DSM 22644 / CIP 104116 / JCM 14847 / LMG 12228 / 1C / PRS 101 / PAO1), this protein is Branched-chain-amino-acid aminotransferase (ilvE).